The primary structure comprises 553 residues: Hydroxylamine reductase (553 aa).

Residues Cys3, Cys6, Cys18, and Cys25 each coordinate [2Fe-2S] cluster. Residues His252, Glu276, Cys320, Cys408, Cys436, Cys461, Glu495, and Lys497 each contribute to the hybrid [4Fe-2O-2S] cluster site. The residue at position 408 (Cys408) is a Cysteine persulfide.

It belongs to the HCP family. [2Fe-2S] cluster is required as a cofactor. It depends on hybrid [4Fe-2O-2S] cluster as a cofactor.

The protein localises to the cytoplasm. The catalysed reaction is A + NH4(+) + H2O = hydroxylamine + AH2 + H(+). Functionally, catalyzes the reduction of hydroxylamine to form NH(3) and H(2)O. The chain is Hydroxylamine reductase from Tolumonas auensis (strain DSM 9187 / NBRC 110442 / TA 4).